The chain runs to 404 residues: G1/S-specific cyclin-E2 (404 aa).

Positions 1–45 (MSRRSSRLQAKQQPQASQTDSPQEAQIIQAKKRKTAQDVKKRKEE) are disordered. A compositionally biased stretch (polar residues) spans 7 to 26 (RLQAKQQPQASQTDSPQEAQ). Serine 21 is modified (phosphoserine). Residues 35–45 (TAQDVKKRKEE) are compositionally biased toward basic and acidic residues. Lysine 348 carries the post-translational modification N6-lactoyllysine. Serine 383 is modified (phosphoserine). Threonine 392 bears the Phosphothreonine mark.

The protein belongs to the cyclin family. Cyclin E subfamily. As to quaternary structure, interacts with the CDK2 (in vivo) and CDK3 (in vitro) protein kinases to form a serine/threonine kinase holoenzyme complex. The cyclin subunit imparts substrate specificity to the complex. Post-translationally, phosphorylation by CDK2 triggers its release from CDK2 and degradation via the ubiquitin proteasome pathway. In terms of processing, lactylated at Lys-348. Delactylated by SIRT3.

The protein localises to the nucleus. Its function is as follows. Essential for the control of the cell cycle at the late G1 and early S phase. In Bos taurus (Bovine), this protein is G1/S-specific cyclin-E2 (CCNE2).